A 149-amino-acid chain; its full sequence is Evolved beta-galactosidase subunit beta (149 aa).

In terms of assembly, heterooctamer of 4 alpha and 4 beta subunits.

Required for full activity of the EbgA enzyme. Exact function not known. This is Evolved beta-galactosidase subunit beta (ebgC) from Escherichia coli O6:H1 (strain CFT073 / ATCC 700928 / UPEC).